Here is a 418-residue protein sequence, read N- to C-terminus: MFDINLIRKDIVVTKEKMLNKKVSSDLFDQIFGLDVLVRNLMQQEQNLNAKKNQLSKEIGILAKNKDPKLQQTLDLVNSIKSELQDISLTLSNKQDELNKLLLVIPNMPDDSVPIGNDENDNVEIKKVFEPRKFDFSPLAHWDLAAKNKLIDFDKSTKITGSRFIIYTNFGARLYRALQQFCLDMNVKAGFNEIWAPVIVNQESLIGSGNLPKFVDDLFKLENSNYYLSPTAEVQLTNLHRNEILKASDLPLYYTALTPCFRSEAGSAGRDVRGVIRQHQFHKVELVKLCKPEDSFKELESMTRQAESILEALELPYRRIALCTGDLGFSSAKTYDLEVWLPSYNAYKEISSCSNCTNFQARRAKIRYKETVDAPTELVHTLNGSSLAIDRLWAAVVENYQQEDGSITIPKALEKYIY.

Residue 231–233 coordinates L-serine; the sequence is TAE. 262-264 is an ATP binding site; sequence RSE. Glutamate 285 lines the L-serine pocket. 349–352 contributes to the ATP binding site; that stretch reads EISS. L-serine is bound at residue serine 385.

This sequence belongs to the class-II aminoacyl-tRNA synthetase family. Type-1 seryl-tRNA synthetase subfamily. As to quaternary structure, homodimer. The tRNA molecule binds across the dimer.

It is found in the cytoplasm. It carries out the reaction tRNA(Ser) + L-serine + ATP = L-seryl-tRNA(Ser) + AMP + diphosphate + H(+). The enzyme catalyses tRNA(Sec) + L-serine + ATP = L-seryl-tRNA(Sec) + AMP + diphosphate + H(+). The protein operates within aminoacyl-tRNA biosynthesis; selenocysteinyl-tRNA(Sec) biosynthesis; L-seryl-tRNA(Sec) from L-serine and tRNA(Sec): step 1/1. In terms of biological role, catalyzes the attachment of serine to tRNA(Ser). Is also able to aminoacylate tRNA(Sec) with serine, to form the misacylated tRNA L-seryl-tRNA(Sec), which will be further converted into selenocysteinyl-tRNA(Sec). The protein is Serine--tRNA ligase of Ureaplasma urealyticum serovar 10 (strain ATCC 33699 / Western).